The primary structure comprises 131 residues: MDSNKETKFSIQYGPKDILDKKFKNKVRGYDPDEVDEFLDGIIRDYEAFTNEIDRLKEENTKLFSRVDELTKQLSVSKNVSAQTPQTNAAATNYDILKRLSNLERHVFGSKLSDSSVDNHDDGNHSDVDQY.

The stretch at 39-76 forms a coiled coil; sequence LDGIIRDYEAFTNEIDRLKEENTKLFSRVDELTKQLSV. The interval 111 to 131 is disordered; that stretch reads KLSDSSVDNHDDGNHSDVDQY. Positions 117-131 are enriched in basic and acidic residues; the sequence is VDNHDDGNHSDVDQY.

It belongs to the GpsB family. Forms polymers through the coiled coil domains. Interacts with PBP1, MreC and EzrA.

It is found in the cytoplasm. Its function is as follows. Divisome component that associates with the complex late in its assembly, after the Z-ring is formed, and is dependent on DivIC and PBP2B for its recruitment to the divisome. Together with EzrA, is a key component of the system that regulates PBP1 localization during cell cycle progression. Its main role could be the removal of PBP1 from the cell pole after pole maturation is completed. Also contributes to the recruitment of PBP1 to the division complex. Not essential for septum formation. This Lacticaseibacillus casei (strain BL23) (Lactobacillus casei) protein is Cell cycle protein GpsB.